A 144-amino-acid chain; its full sequence is Large ribosomal subunit protein uL24 (144 aa).

The tract at residues 1 to 22 is disordered; sequence MKFNKMVSSDRGKNRKRHFNAP. The span at 13–22 shows a compositional bias: basic residues; that stretch reads KNRKRHFNAP.

Belongs to the universal ribosomal protein uL24 family.

This chain is Large ribosomal subunit protein uL24 (RPL26), found in Littorina littorea (Common periwinkle).